The following is a 922-amino-acid chain: Cell surface glycoprotein 2 (922 aa).

Positions 1-23 (MTGNSDKVRSLFLTALMVFSVFA) are cleaved as a signal peptide. Residues Asn-37, Asn-56, Asn-110, Asn-220, Asn-251, Asn-262, and Asn-292 are each glycosylated (N-linked (GlcNAc...) asparagine). Asn-307 is a glycosylation site (N-linked (GalNAc...) asparagine). N-linked (GlcNAc...) asparagine glycans are attached at residues Asn-319, Asn-344, Asn-396, Asn-437, Asn-490, Asn-523, Asn-557, Asn-574, Asn-587, Asn-616, Asn-700, Asn-717, Asn-809, Asn-838, and Asn-847. The disordered stretch occupies residues 816-899 (PHQDTNGNEE…GTETTEAEGP (84 aa)). The span at 835–850 (YTQNGSAVTDSANVTV) shows a compositional bias: polar residues. The span at 853-887 (EEPEDTPEDTPEDTPEDTPEDTPEDTPADTPEDTP) shows a compositional bias: acidic residues. The span at 888–899 (DTGTETTEAEGP) shows a compositional bias: low complexity. The chain crosses the membrane as a helical span at residues 898–918 (GPGFTAAIALIALVAAALLAV). The PGF sorting signal motif lies at 899 to 901 (PGF).

Belongs to the halobacterial S-layer protein family. N-glycosylated on Asn-307; this N-linked glycan is a branched trisaccharide containing 2-amino-6-sulfo-2,6-dideoxy-glucose (sulfoquinovosamine). Post-translationally, O-glycosylated on Thr residues within the DTPE repeats in the C-terminal region; glycans consist of Glc-Gal disaccharides. In terms of processing, cleaved by the archaeosortase ArtA at the C-terminus, with removal of a short hydrophobic segment. Lipidation.

The protein localises to the secreted. It is found in the cell wall. It localises to the S-layer. The protein resides in the cell membrane. Its function is as follows. S-layer protein. The S-layer is a paracrystalline mono-layered assembly of proteins which coat the surface of the cell. In H.hispanica, the S-layer contains two different glycoproteins, Slg1 and Slg2, which share highly similar amino acid sequences. The chain is Cell surface glycoprotein 2 from Haloarcula hispanica (strain ATCC 33960 / DSM 4426 / JCM 8911 / NBRC 102182 / NCIMB 2187 / VKM B-1755).